A 744-amino-acid polypeptide reads, in one-letter code: ATP-dependent zinc metalloprotease FtsH (744 aa).

The Cytoplasmic portion of the chain corresponds to 1-16 (MQDQNNSNTPKKKKLS). Residues 17 to 37 (FWGIIGIVASILVLLVIAYII) traverse the membrane as a helical segment. At 38–177 (YYYVSQTTVL…ESIWSTVLRY (140 aa)) the chain is on the extracellular side. A helical transmembrane segment spans residues 178 to 198 (GTNIIFLLLFAASFIFMFMSF). The Cytoplasmic portion of the chain corresponds to 199 to 744 (RSQRGTGGLL…EEKSKDEKNN (546 aa)). Residue 264-271 (GPPGTGKT) coordinates ATP. H486 is a Zn(2+) binding site. The active site involves E487. The Zn(2+) site is built by H490 and D564. Positions 722–744 (IEANKSSSKSTVNEEKSKDEKNN) are disordered. Positions 733 to 744 (VNEEKSKDEKNN) are enriched in basic and acidic residues.

In the central section; belongs to the AAA ATPase family. The protein in the C-terminal section; belongs to the peptidase M41 family. As to quaternary structure, homohexamer. Zn(2+) serves as cofactor.

Its subcellular location is the cell membrane. Its function is as follows. Acts as a processive, ATP-dependent zinc metallopeptidase for both cytoplasmic and membrane proteins. Plays a role in the quality control of integral membrane proteins. The chain is ATP-dependent zinc metalloprotease FtsH from Metamycoplasma arthritidis (strain 158L3-1) (Mycoplasma arthritidis).